Consider the following 48-residue polypeptide: Cytochrome c oxidase subunit 2 (48 aa).

At 1–14 (MAHPAQLGLQDASS) the chain is on the mitochondrial intermembrane side. A helical transmembrane segment spans residues 15–45 (PIXEELLHFHEDALMIVFLISTLVLYIITTT). The Mitochondrial matrix portion of the chain corresponds to 46–48 (VST).

It belongs to the cytochrome c oxidase subunit 2 family. Component of the cytochrome c oxidase (complex IV, CIV), a multisubunit enzyme composed of 14 subunits. The complex is composed of a catalytic core of 3 subunits MT-CO1, MT-CO2 and MT-CO3, encoded in the mitochondrial DNA, and 11 supernumerary subunits COX4I, COX5A, COX5B, COX6A, COX6B, COX6C, COX7A, COX7B, COX7C, COX8 and NDUFA4, which are encoded in the nuclear genome. The complex exists as a monomer or a dimer and forms supercomplexes (SCs) in the inner mitochondrial membrane with NADH-ubiquinone oxidoreductase (complex I, CI) and ubiquinol-cytochrome c oxidoreductase (cytochrome b-c1 complex, complex III, CIII), resulting in different assemblies (supercomplex SCI(1)III(2)IV(1) and megacomplex MCI(2)III(2)IV(2)). Found in a complex with TMEM177, COA6, COX18, COX20, SCO1 and SCO2. Interacts with TMEM177 in a COX20-dependent manner. Interacts with COX20. Interacts with COX16. It depends on Cu cation as a cofactor.

The protein localises to the mitochondrion inner membrane. The catalysed reaction is 4 Fe(II)-[cytochrome c] + O2 + 8 H(+)(in) = 4 Fe(III)-[cytochrome c] + 2 H2O + 4 H(+)(out). Its function is as follows. Component of the cytochrome c oxidase, the last enzyme in the mitochondrial electron transport chain which drives oxidative phosphorylation. The respiratory chain contains 3 multisubunit complexes succinate dehydrogenase (complex II, CII), ubiquinol-cytochrome c oxidoreductase (cytochrome b-c1 complex, complex III, CIII) and cytochrome c oxidase (complex IV, CIV), that cooperate to transfer electrons derived from NADH and succinate to molecular oxygen, creating an electrochemical gradient over the inner membrane that drives transmembrane transport and the ATP synthase. Cytochrome c oxidase is the component of the respiratory chain that catalyzes the reduction of oxygen to water. Electrons originating from reduced cytochrome c in the intermembrane space (IMS) are transferred via the dinuclear copper A center (CU(A)) of subunit 2 and heme A of subunit 1 to the active site in subunit 1, a binuclear center (BNC) formed by heme A3 and copper B (CU(B)). The BNC reduces molecular oxygen to 2 water molecules using 4 electrons from cytochrome c in the IMS and 4 protons from the mitochondrial matrix. This chain is Cytochrome c oxidase subunit 2 (mt-co2), found in Polypterus sp. (Bichir).